Consider the following 346-residue polypeptide: Large ribosomal subunit protein uL3 (346 aa).

The tract at residues 324–346 (RPPKKKPPVERPQITYVSRESKQ) is disordered.

Belongs to the universal ribosomal protein uL3 family. In terms of assembly, part of the 50S ribosomal subunit. Forms a cluster with proteins L14 and L24e.

Its function is as follows. One of the primary rRNA binding proteins, it binds directly near the 3'-end of the 23S rRNA, where it nucleates assembly of the 50S subunit. This is Large ribosomal subunit protein uL3 from Thermococcus kodakarensis (strain ATCC BAA-918 / JCM 12380 / KOD1) (Pyrococcus kodakaraensis (strain KOD1)).